The chain runs to 162 residues: NADH-quinone oxidoreductase subunit I (162 aa).

4Fe-4S ferredoxin-type domains are found at residues 53-83 (LRRY…IEAE) and 93-122 (TRYD…ETRI). The [4Fe-4S] cluster site is built by C63, C66, C69, C73, C102, C105, C108, and C112.

Belongs to the complex I 23 kDa subunit family. As to quaternary structure, NDH-1 is composed of 14 different subunits. Subunits NuoA, H, J, K, L, M, N constitute the membrane sector of the complex. Requires [4Fe-4S] cluster as cofactor.

The protein localises to the cell inner membrane. The enzyme catalyses a quinone + NADH + 5 H(+)(in) = a quinol + NAD(+) + 4 H(+)(out). Its function is as follows. NDH-1 shuttles electrons from NADH, via FMN and iron-sulfur (Fe-S) centers, to quinones in the respiratory chain. The immediate electron acceptor for the enzyme in this species is believed to be ubiquinone. Couples the redox reaction to proton translocation (for every two electrons transferred, four hydrogen ions are translocated across the cytoplasmic membrane), and thus conserves the redox energy in a proton gradient. The polypeptide is NADH-quinone oxidoreductase subunit I (Dechloromonas aromatica (strain RCB)).